Reading from the N-terminus, the 177-residue chain is Large ribosomal subunit protein uL6 (177 aa).

A disordered region spans residues 151 to 177 (KRPPEPYKGKGVKYADEHIRRKEGKKS). Residues 152-177 (RPPEPYKGKGVKYADEHIRRKEGKKS) show a composition bias toward basic and acidic residues.

Belongs to the universal ribosomal protein uL6 family. In terms of assembly, part of the 50S ribosomal subunit.

This protein binds to the 23S rRNA, and is important in its secondary structure. It is located near the subunit interface in the base of the L7/L12 stalk, and near the tRNA binding site of the peptidyltransferase center. The polypeptide is Large ribosomal subunit protein uL6 (Fusobacterium nucleatum subsp. nucleatum (strain ATCC 25586 / DSM 15643 / BCRC 10681 / CIP 101130 / JCM 8532 / KCTC 2640 / LMG 13131 / VPI 4355)).